Reading from the N-terminus, the 230-residue chain is SPbeta prophage-derived putative HNH endonuclease YoqL (230 aa).

Positions 136–188 (CSYCGLKIEDHKILFKGTYIQSDFHKEHVDHKGANDISNCIPACKSCNSSKHD) constitute an HNH domain.

Belongs to the HNH nuclease family.

This chain is SPbeta prophage-derived putative HNH endonuclease YoqL (yoqL), found in Bacillus subtilis (strain 168).